The primary structure comprises 507 residues: Proton-coupled zinc antiporter SLC30A1 (507 aa).

Residues 1–10 (MGCWGRNRGR) lie on the Cytoplasmic side of the membrane. Residues 11-31 (LLCMLLLTFMFMVLEVVVSRV) traverse the membrane as a helical segment. Residues 32 to 35 (TASL) are Extracellular-facing. Residues 36–56 (AMLSDSFHMLSDVLALVVALV) traverse the membrane as a helical segment. Zn(2+) is bound by residues histidine 43 and aspartate 47. The Cytoplasmic portion of the chain corresponds to 57 to 78 (AERFARRTHATQKNTFGWIRAE). The helical transmembrane segment at 79 to 99 (VMGALVNAIFLTGLCFAILLE) threads the bilayer. The Extracellular portion of the chain corresponds to 100–113 (AVERFIEPHEMQQP). Residues 114 to 134 (LVVLSVGVAGLLVNVLGLCLF) form a helical membrane-spanning segment. Over 135–247 (HHHSGEGQGA…RAGQLNMRGV (113 aa)) the chain is Cytoplasmic. The disordered stretch occupies residues 140 to 218 (EGQGAGHGHS…EKLRSDDPVD (79 aa)). The tract at residues 145-156 (GHGHSHGHGHGH) is 6 X 2 AA approximate repeats of H-G. Over residues 147–165 (GHSHGHGHGHLAKGARKAG) the composition is skewed to basic residues. A compositionally biased stretch (polar residues) spans 188–200 (TNTLVANTSNSNG). The segment covering 204-215 (DQAEPEKLRSDD) has biased composition (basic and acidic residues). Residues 248-268 (FLHVLGDALGSVIVVVNALVF) form a helical membrane-spanning segment. Positions 250 and 254 each coordinate Zn(2+). Residues 269–307 (YFSWKGCTEDDFCVNPCFPDPCKSSVELMNSTQAPMHEA) lie on the Extracellular side of the membrane. Asparagine 298 is a glycosylation site (N-linked (GlcNAc...) asparagine). A helical transmembrane segment spans residues 308–328 (GPCWVLYLDPTLCIIMVCILL). Residues 329–507 (YTTYPLLKES…VPNKQPESSL (179 aa)) are Cytoplasmic-facing. Serine 506 is modified (phosphoserine).

The protein belongs to the cation diffusion facilitator (CDF) transporter (TC 2.A.4) family. SLC30A subfamily. As to quaternary structure, homodimer. Interacts with TMEM163. Interacts and forms a complex with TMC6 and TMC8; the interaction regulates zinc transport into the ER. Widely expressed. Detected in duodenum and jejunum but not in ileum and colon (at protein level). Expressed by neuroglial cells (at protein level).

The protein localises to the cell membrane. It localises to the basolateral cell membrane. It is found in the cytoplasmic vesicle membrane. Its subcellular location is the cytoplasm. The protein resides in the endoplasmic reticulum membrane. The protein localises to the golgi apparatus membrane. It localises to the nucleus membrane. It carries out the reaction Zn(2+)(in) + 2 H(+)(out) = Zn(2+)(out) + 2 H(+)(in). With respect to regulation, calcium-dependent. In terms of biological role, zinc ion:proton antiporter that could function at the plasma membrane mediating zinc efflux from cells against its electrochemical gradient protecting them from intracellular zinc accumulation and toxicity. Alternatively, could prevent the transport to the plasma membrane of CACNB2, the L-type calcium channels regulatory subunit, through a yet to be defined mechanism. By modulating the expression of these channels at the plasma membrane, could prevent calcium and zinc influx into cells. By the same mechanism, could also prevent L-type calcium channels-mediated heavy metal influx into cells. In some cells, could also function as a zinc ion:proton antiporter mediating zinc entry into the lumen of cytoplasmic vesicles. In macrophages, can increase zinc ions concentration into the lumen of cytoplasmic vesicles containing engulfed bacteria and could help inactivate them. Forms a complex with TMC6/EVER1 and TMC8/EVER2 at the ER membrane of keratynocytes which facilitates zinc uptake into the ER. Down-regulates the activity of transcription factors induced by zinc and cytokines. The sequence is that of Proton-coupled zinc antiporter SLC30A1 from Rattus norvegicus (Rat).